Here is a 45-residue protein sequence, read N- to C-terminus: MSKRTFQPNNRRRARTHGFRLRMRTRAGRAILSARRRKGRSELSA.

It belongs to the bacterial ribosomal protein bL34 family.

This chain is Large ribosomal subunit protein bL34, found in Frankia casuarinae (strain DSM 45818 / CECT 9043 / HFP020203 / CcI3).